The following is a 338-amino-acid chain: 2-oxoglutarate-dependent dioxygenase ecdG (338 aa).

A Fe2OG dioxygenase domain is found at 165 to 273 (PSVTNLGFLR…KYTLAYFVRP (109 aa)). His-190, Asp-192, and His-249 together coordinate Fe cation. A 2-oxoglutarate-binding site is contributed by Lys-264.

It belongs to the iron/ascorbate-dependent oxidoreductase family. Fe(2+) serves as cofactor.

It participates in antifungal biosynthesis. In terms of biological role, 2-oxoglutarate-dependent dioxygenase; part of the gene cluster that mediates the biosynthesis of echinocandin B, a fungal lipidated cyclic hexapeptide that acts as an antifungal agent. Linoleoyl-AMP, produced by the fatty-acyl-AMP ligase ecdI, is transferred to the initiation carrier domain (T0) of ecdA. The linoleoyl-S-phosphopantetheinyl-T0 is sequentially extended with L-ornithine, L-threonine, L-proline, L-homotyrosine, L-threonine, and 4R-methyl-L-proline to form the linear hexapeptide. Thereafter, the terminal condensation (C7) performs macrocyclization of the NRPS product and the cyclic scaffold is released from ecdA. All six of the amino acid residues are hydroxylated, including 4R,5R-dihydroxy-L-ornithine, 4R-hydroxyl-L-proline, 3S,4S-dihydroxy-L-homotyrosine, and 3S-hydroxyl-4S-methyl-L-prolin. In the pathway, all the hydroxylation reactions are proposed to occur following completion of the cyclic peptide, so the unhydroxylated precursor produced by ecdA will undergo six rounds of hydroxylation. Five hydroxylase genes (ecdG, ecdH, ecdK, htyE and htyF) are embedded within the echinocandin B (ecd) and L-homotyrosine (hty) clusters. The chain is 2-oxoglutarate-dependent dioxygenase ecdG from Aspergillus rugulosus (Emericella rugulosa).